Consider the following 278-residue polypeptide: Sulfur carrier protein FdhD (278 aa).

The Cysteine persulfide intermediate role is filled by cysteine 121. Mo-bis(molybdopterin guanine dinucleotide) is bound at residue phenylalanine 260–arginine 265.

It belongs to the FdhD family.

The protein localises to the cytoplasm. Its function is as follows. Required for formate dehydrogenase (FDH) activity. Acts as a sulfur carrier protein that transfers sulfur from IscS to the molybdenum cofactor prior to its insertion into FDH. This chain is Sulfur carrier protein FdhD, found in Escherichia coli O127:H6 (strain E2348/69 / EPEC).